The chain runs to 156 residues: Ribosomal RNA large subunit methyltransferase H (156 aa).

Residues Leu73, Gly104, and 123–128 (LSPLTL) contribute to the S-adenosyl-L-methionine site.

It belongs to the RNA methyltransferase RlmH family. As to quaternary structure, homodimer.

The protein resides in the cytoplasm. The enzyme catalyses pseudouridine(1915) in 23S rRNA + S-adenosyl-L-methionine = N(3)-methylpseudouridine(1915) in 23S rRNA + S-adenosyl-L-homocysteine + H(+). Specifically methylates the pseudouridine at position 1915 (m3Psi1915) in 23S rRNA. The sequence is that of Ribosomal RNA large subunit methyltransferase H from Aliivibrio salmonicida (strain LFI1238) (Vibrio salmonicida (strain LFI1238)).